A 223-amino-acid polypeptide reads, in one-letter code: Ribonuclease 3 (223 aa).

The 131-residue stretch at 1–131 folds into the RNase III domain; sequence MDGVDELLLR…LIGAVMVDQG (131 aa). A Mg(2+)-binding site is contributed by E44. The active site involves D48. The Mg(2+) site is built by D117 and E120. The active site involves E120. The region spanning 157-220 is the DRBM domain; it reads DPKTKLQKLT…AMSALASLEN (64 aa).

This sequence belongs to the ribonuclease III family. Homodimer. It depends on Mg(2+) as a cofactor.

The protein localises to the cytoplasm. It catalyses the reaction Endonucleolytic cleavage to 5'-phosphomonoester.. Digests double-stranded RNA. Involved in the processing of primary rRNA transcript to yield the immediate precursors to the large and small rRNAs (23S and 16S). Processes some mRNAs, and tRNAs when they are encoded in the rRNA operon. Processes pre-crRNA and tracrRNA of type II CRISPR loci if present in the organism. The chain is Ribonuclease 3 from Tropheryma whipplei (strain Twist) (Whipple's bacillus).